Consider the following 199-residue polypeptide: Recombination protein RecR (199 aa).

The C4-type zinc-finger motif lies at 57 to 72 (CPICGNITEKEVCDIC). The region spanning 80–176 (TTIMVVEQPK…KVTRLAAGLS (97 aa)) is the Toprim domain.

This sequence belongs to the RecR family.

In terms of biological role, may play a role in DNA repair. It seems to be involved in an RecBC-independent recombinational process of DNA repair. It may act with RecF and RecO. This Lactobacillus helveticus (strain DPC 4571) protein is Recombination protein RecR.